A 2271-amino-acid polypeptide reads, in one-letter code: Serine-rich adhesin for platelets (2271 aa).

The first 89 residues, 1-89 (MSKRQKAFHD…VNMLHDQQAF (89 aa)), serve as a signal peptide directing secretion. Positions 90 to 230 (AASDAPLTSE…KTSTTSTSTA (141 aa)) are serine-rich repeat region 1, SRR1. Polar residues predominate over residues 100-111 (LNTQSETVGNQN). Disordered regions lie at residues 100–229 (LNTQ…STST), 751–791 (NSMS…VVST), and 806–2243 (SVSA…GLLG). Residues 112 to 128 (STTIEASTSTADSTSVT) are compositionally biased toward low complexity. A compositionally biased stretch (polar residues) spans 129–140 (KNSSSVQTSNSD). The span at 150 to 229 (VTSTTNSTSN…NKTSTTSTST (80 aa)) shows a compositional bias: low complexity. Positions 231–751 (PVKLRTFSRL…TTFKYEVTRN (521 aa)) are non-repeat region (NRR). 3 stretches are compositionally biased toward low complexity: residues 752–791 (SMSD…VVST), 806–1392 (SVSA…LSLS), and 1402–2214 (SNSA…ATSE). The serine-rich repeat region 2, SRR2 stretch occupies residues 752–2232 (SMSDSVSTSG…AQSEKRLPDT (1481 aa)). The LPXTG sorting signal motif lies at 2229 to 2233 (LPDTG). T2232 carries the pentaglycyl murein peptidoglycan amidated threonine modification. Residues 2233-2271 (GDSIKQNGLLGGVMTLLVGLGLMKRKKKKDENDQDDSQA) constitute a propeptide, removed by sortase.

The protein belongs to the serine-rich repeat protein (SRRP) family. In terms of processing, proteolytically cleaved by a metalloprotease. Post-translationally, glycosylated. It is probable that most of the Ser residues in SSR1 and SSR2 are O-GlcNAcylated. Sequential glycosylation by sugar transferases are able to generate complex sugar polymorphisms.

It localises to the secreted. The protein resides in the cell wall. In terms of biological role, mediates binding to human platelets, possibly through a receptor-ligand interaction. Probably associated with virulence in endovascular infection. The polypeptide is Serine-rich adhesin for platelets (sraP) (Staphylococcus aureus (strain Mu50 / ATCC 700699)).